A 509-amino-acid polypeptide reads, in one-letter code: Maturase K (509 aa).

Belongs to the intron maturase 2 family. MatK subfamily.

Its subcellular location is the plastid. The protein localises to the chloroplast. Usually encoded in the trnK tRNA gene intron. Probably assists in splicing its own and other chloroplast group II introns. This chain is Maturase K, found in Thujopsis dolabrata (Hiba arborvitae).